Here is a 52-residue protein sequence, read N- to C-terminus: Large ribosomal subunit protein bL33 (52 aa).

The protein belongs to the bacterial ribosomal protein bL33 family.

This is Large ribosomal subunit protein bL33 from Chlamydia trachomatis serovar A (strain ATCC VR-571B / DSM 19440 / HAR-13).